Consider the following 379-residue polypeptide: Class V chitinase (379 aa).

An N-terminal signal peptide occupies residues 1–24 (MSSTKLISLIVSITFFLTLQCSMA). A GH18 domain is found at 27–369 (VVKASYWFPA…RAASQAWDAT (343 aa)). A chitin-binding site is contributed by Gly99. Glu140 acts as the Proton donor in catalysis. Position 259 (Tyr259) interacts with chitin. Asn307 and Asn327 each carry an N-linked (GlcNAc...) asparagine glycan. Position 348 (Trp348) interacts with chitin.

Belongs to the glycosyl hydrolase 18 family. Chitinase class V subfamily.

It carries out the reaction Random endo-hydrolysis of N-acetyl-beta-D-glucosaminide (1-&gt;4)-beta-linkages in chitin and chitodextrins.. The catalysed reaction is Hydrolysis of N,N'-diacetylchitobiose from the non-reducing end of chitin and chitodextrins.. It participates in glycan degradation; chitin degradation. In terms of biological role, can hydrolyze glycol chitin and chitin oligosaccharides (e.g. N-acetylglucosamine) (GlcNAc)4, (GlcNAc)5 and (GlcNAc)6. Hydrolyzes N-acetylglucosamine oligomers producing dimers from the non-reducing end of the substrates. This is Class V chitinase from Arabidopsis thaliana (Mouse-ear cress).